A 621-amino-acid chain; its full sequence is Glutathione-regulated potassium-efflux system protein KefC (621 aa).

Transmembrane regions (helical) follow at residues 4–24, 26–46, 54–74, 90–110, 114–134, 149–169, 178–198, 218–237, 238–257, 270–290, 294–314, 326–346, and 359–379; these read HTLI…PIAV, LGLG…PWAL, AILH…GLEL, GALQ…LLGL, VAEL…MQAM, FAVL…IPLL, LMAF…VVVL, VFSA…LEEV, GLSM…SSEY, GLLL…GTLV, LRIV…LWLI, RWFA…FGAA, and ALTL…VLLT. The RCK N-terminal domain maps to 399–518; it reads QPRVIVAGFG…AGVEAPERET (120 aa). Residues 598–621 are disordered; it reads GWQGTEEGRHTGDIADEPENKPSA.

Belongs to the monovalent cation:proton antiporter 2 (CPA2) transporter (TC 2.A.37) family. KefC subfamily. As to quaternary structure, homodimer. Interacts with the regulatory subunit KefF.

The protein localises to the cell inner membrane. Pore-forming subunit of a potassium efflux system that confers protection against electrophiles. Catalyzes K(+)/H(+) antiport. In Klebsiella pneumoniae subsp. pneumoniae (strain ATCC 700721 / MGH 78578), this protein is Glutathione-regulated potassium-efflux system protein KefC.